The sequence spans 427 residues: Serine--tRNA ligase (427 aa).

Residue 235–237 participates in L-serine binding; it reads TAE. ATP is bound by residues 266 to 268 and valine 282; that span reads RRE. L-serine is bound at residue glutamate 289. ATP is bound at residue 353–356; it reads EASS. Position 389 (serine 389) interacts with L-serine.

Belongs to the class-II aminoacyl-tRNA synthetase family. Type-1 seryl-tRNA synthetase subfamily. As to quaternary structure, homodimer. The tRNA molecule binds across the dimer.

Its subcellular location is the cytoplasm. It catalyses the reaction tRNA(Ser) + L-serine + ATP = L-seryl-tRNA(Ser) + AMP + diphosphate + H(+). The catalysed reaction is tRNA(Sec) + L-serine + ATP = L-seryl-tRNA(Sec) + AMP + diphosphate + H(+). The protein operates within aminoacyl-tRNA biosynthesis; selenocysteinyl-tRNA(Sec) biosynthesis; L-seryl-tRNA(Sec) from L-serine and tRNA(Sec): step 1/1. Its function is as follows. Catalyzes the attachment of serine to tRNA(Ser). Is also able to aminoacylate tRNA(Sec) with serine, to form the misacylated tRNA L-seryl-tRNA(Sec), which will be further converted into selenocysteinyl-tRNA(Sec). The polypeptide is Serine--tRNA ligase (Chloroherpeton thalassium (strain ATCC 35110 / GB-78)).